The following is a 334-amino-acid chain: Ornithine carbamoyltransferase (334 aa).

Residues 57–60 (STRT), Gln-84, Arg-108, and 135–138 (HPTQ) each bind carbamoyl phosphate. Residues Asn-169, Asp-233, and 237-238 (SM) each bind L-ornithine. Carbamoyl phosphate is bound by residues 275-276 (CL) and Arg-320.

The protein belongs to the aspartate/ornithine carbamoyltransferase superfamily. OTCase family.

Its subcellular location is the cytoplasm. It carries out the reaction carbamoyl phosphate + L-ornithine = L-citrulline + phosphate + H(+). It participates in amino-acid biosynthesis; L-arginine biosynthesis; L-arginine from L-ornithine and carbamoyl phosphate: step 1/3. Its function is as follows. Reversibly catalyzes the transfer of the carbamoyl group from carbamoyl phosphate (CP) to the N(epsilon) atom of ornithine (ORN) to produce L-citrulline. The sequence is that of Ornithine carbamoyltransferase from Aeromonas salmonicida (strain A449).